The primary structure comprises 380 residues: Cytochrome b (380 aa).

Helical transmembrane passes span 34–54, 78–99, 114–134, and 179–199; these read FGSL…LLAM, WLIR…YLHI, WNTG…GYVL, and FFAL…IHLT. His-84 and His-98 together coordinate heme b. Heme b-binding residues include His-183 and His-197. Residue His-202 participates in a ubiquinone binding. Helical transmembrane passes span 227-247, 289-309, 321-341, and 348-368; these read LKDI…ALFS, LGGV…PFLH, LSQL…WVGS, and FIII…ILFP.

Belongs to the cytochrome b family. The cytochrome bc1 complex contains 11 subunits: 3 respiratory subunits (MT-CYB, CYC1 and UQCRFS1), 2 core proteins (UQCRC1 and UQCRC2) and 6 low-molecular weight proteins (UQCRH/QCR6, UQCRB/QCR7, UQCRQ/QCR8, UQCR10/QCR9, UQCR11/QCR10 and a cleavage product of UQCRFS1). This cytochrome bc1 complex then forms a dimer. Requires heme b as cofactor.

It localises to the mitochondrion inner membrane. Its function is as follows. Component of the ubiquinol-cytochrome c reductase complex (complex III or cytochrome b-c1 complex) that is part of the mitochondrial respiratory chain. The b-c1 complex mediates electron transfer from ubiquinol to cytochrome c. Contributes to the generation of a proton gradient across the mitochondrial membrane that is then used for ATP synthesis. The polypeptide is Cytochrome b (MT-CYB) (Calonectris leucomelas (Streaked shearwater)).